A 473-amino-acid polypeptide reads, in one-letter code: Crt homolog 1 (473 aa).

Topologically, residues methionine 1–threonine 49 are cytoplasmic. A helical transmembrane segment spans residues isoleucine 50–leucine 70. Over lysine 71–tyrosine 80 the chain is Vacuolar. The chain crosses the membrane as a helical span at residues alanine 81–alanine 101. At tyrosine 102–lysine 121 the chain is on the cytoplasmic side. The chain crosses the membrane as a helical span at residues phenylalanine 122–serine 142. Topologically, residues threonine 143–proline 146 are vacuolar. A helical membrane pass occupies residues leucine 147 to leucine 167. At lysine 168–glutamine 175 the chain is on the cytoplasmic side. A helical transmembrane segment spans residues leucine 176–glycine 196. Residues glycine 197–asparagine 207 are Vacuolar-facing. Residues phenylalanine 208–phenylalanine 228 traverse the membrane as a helical segment. The Cytoplasmic portion of the chain corresponds to glutamine 229–serine 248. The chain crosses the membrane as a helical span at residues isoleucine 249–phenylalanine 269. Over glutamate 270–tryptophan 322 the chain is Vacuolar. The N-linked (GlcNAc...) asparagine glycan is linked to asparagine 295. Residues isoleucine 323 to leucine 343 form a helical membrane-spanning segment. Residues lysine 344–serine 352 are Cytoplasmic-facing. The chain crosses the membrane as a helical span at residues isoleucine 353–glycine 373. Residue serine 374 is a topological domain, vacuolar. The helical transmembrane segment at alanine 375–glycine 395 threads the bilayer. Residues glycine 396–alanine 473 are Cytoplasmic-facing.

It belongs to the CRT-like transporter family.

It localises to the vacuole membrane. Its function is as follows. Nutrient transporter. Involved in maintaining the osmotic homeostasis of the digestive vacuole. The sequence is that of Crt homolog 1 (crtp1) from Dictyostelium discoideum (Social amoeba).